The chain runs to 434 residues: F-box/LRR-repeat protein 21 (434 aa).

An F-box domain is found at 39-85; the sequence is RLDWGSLPHRVVLCVFQYLPLIDRARASSVCRRWNEVFHIPDLWRKF. LRR repeat units follow at residues 140 to 165, 187 to 213, 214 to 239, 242 to 265, 322 to 347, 349 to 374, and 375 to 400; these read LVNC…SKSH, DTPV…KMSS, CPHV…ALNY, LSDE…RIDV, GRSV…VVCA, GIQV…GLSE, and CEVS…SIME.

In terms of assembly, part of the SCF (SKP1-CUL1-F-box) E3 ubiquitin-protein ligase complex SCF(FBXL21) composed of CUL1, SKP1, RBX1 and FBXL21. Interacts with CRY2. Interacts with CRY1. In terms of tissue distribution, expressed in the adenohypophysis, hypothalamus (especially in the suprachiasmatic nucleus or nuclei, SCN) and pineal, all neuroendocrine structures associated with timing and homeostasis.

The protein resides in the cytoplasm. It is found in the cytosol. The protein localises to the nucleus. It participates in protein modification; protein ubiquitination. In terms of biological role, substrate-recognition component of the SCF(FBXL21) E3 ubiquitin ligase complex involved in circadian rhythm function. Plays a key role in the maintenance of both the speed and the robustness of the circadian clock oscillation. The SCF(FBXL21) complex mainly acts in the cytosol and mediates ubiquitination of CRY proteins (CRY1 and CRY2), leading to CRY proteins stabilization. The SCF(FBXL21) complex counteracts the activity of the SCF(FBXL3) complex and protects CRY proteins from degradation. Involved in the hypothalamic suprachiasmatic nucleus (SCN) clock regulating temporal organization of the daily activities. The sequence is that of F-box/LRR-repeat protein 21 (Fbxl21) from Ovis aries (Sheep).